We begin with the raw amino-acid sequence, 472 residues long: Probable diguanylate cyclase DgcF (472 aa).

8 helical membrane-spanning segments follow: residues 21-41, 44-64, 90-110, 128-148, 167-187, 198-218, 237-257, and 273-293; these read SIAIFALTTLFYFIGAELRLV, LSLFWPLNGVMAGVFARYVWL, VSLAINFSNMMFIVTVALLVV, LFNYCLIAALLCAIVGAIGSV, FSTGVLIVPCMLTLAIPGVLP, IALIVSVIASVVIGGAGSLAF, LLTFVTGAVEIVLVANSVIDI, and LGIATMAICPIMVSFSVAAIN. The GGDEF domain maps to 330–467; the sequence is QHLTVMLLDI…GRNRTSTMRY (138 aa). Residues Asp338 and Ile339 each contribute to the Mg(2+) site. Residues Asn346, His351, and Asp355 each contribute to the substrate site. Glu381 lines the Mg(2+) pocket.

In terms of assembly, homodimer. Mg(2+) is required as a cofactor.

The protein localises to the cell membrane. It carries out the reaction 2 GTP = 3',3'-c-di-GMP + 2 diphosphate. Its pathway is purine metabolism; 3',5'-cyclic di-GMP biosynthesis. Its function is as follows. Catalyzes the synthesis of cyclic-di-GMP (c-di-GMP) via the condensation of 2 GTP molecules. The protein is Probable diguanylate cyclase DgcF of Escherichia coli O157:H7.